Here is a 349-residue protein sequence, read N- to C-terminus: UDP-N-acetylenolpyruvoylglucosamine reductase (349 aa).

Residues 17 to 187 (VNESADLIIQ…TAITLRLNKQ (171 aa)) form the FAD-binding PCMH-type domain. The active site involves R163. The active-site Proton donor is the S233. The active site involves E328.

Belongs to the MurB family. Requires FAD as cofactor.

The protein resides in the cytoplasm. The catalysed reaction is UDP-N-acetyl-alpha-D-muramate + NADP(+) = UDP-N-acetyl-3-O-(1-carboxyvinyl)-alpha-D-glucosamine + NADPH + H(+). It participates in cell wall biogenesis; peptidoglycan biosynthesis. In terms of biological role, cell wall formation. The sequence is that of UDP-N-acetylenolpyruvoylglucosamine reductase from Aliivibrio fischeri (strain ATCC 700601 / ES114) (Vibrio fischeri).